The chain runs to 906 residues: Protein translocase subunit SecA (906 aa).

ATP contacts are provided by residues Gln87, Gly105 to Thr109, and Asp512. The disordered stretch occupies residues Arg879–Ser906. The Zn(2+) site is built by Cys890, Cys892, Cys901, and His902.

It belongs to the SecA family. Monomer and homodimer. Part of the essential Sec protein translocation apparatus which comprises SecA, SecYEG and auxiliary proteins SecDF-YajC and YidC. Requires Zn(2+) as cofactor.

It localises to the cell inner membrane. Its subcellular location is the cytoplasm. It carries out the reaction ATP + H2O + cellular proteinSide 1 = ADP + phosphate + cellular proteinSide 2.. Part of the Sec protein translocase complex. Interacts with the SecYEG preprotein conducting channel. Has a central role in coupling the hydrolysis of ATP to the transfer of proteins into and across the cell membrane, serving both as a receptor for the preprotein-SecB complex and as an ATP-driven molecular motor driving the stepwise translocation of polypeptide chains across the membrane. This is Protein translocase subunit SecA from Shewanella frigidimarina (strain NCIMB 400).